We begin with the raw amino-acid sequence, 243 residues long: Orotidine 5'-phosphate decarboxylase (243 aa).

Substrate-binding positions include Asp-18, Lys-39, 66 to 75 (DLKFHDIPTT), Thr-130, Arg-192, Gln-201, Gly-221, and Arg-222. The active-site Proton donor is the Lys-68.

It belongs to the OMP decarboxylase family. Type 1 subfamily. Homodimer.

It carries out the reaction orotidine 5'-phosphate + H(+) = UMP + CO2. The protein operates within pyrimidine metabolism; UMP biosynthesis via de novo pathway; UMP from orotate: step 2/2. Its function is as follows. Catalyzes the decarboxylation of orotidine 5'-monophosphate (OMP) to uridine 5'-monophosphate (UMP). The chain is Orotidine 5'-phosphate decarboxylase from Synechococcus sp. (strain CC9311).